Consider the following 194-residue polypeptide: Imidazoleglycerol-phosphate dehydratase (194 aa).

The protein belongs to the imidazoleglycerol-phosphate dehydratase family.

It is found in the cytoplasm. It catalyses the reaction D-erythro-1-(imidazol-4-yl)glycerol 3-phosphate = 3-(imidazol-4-yl)-2-oxopropyl phosphate + H2O. The protein operates within amino-acid biosynthesis; L-histidine biosynthesis; L-histidine from 5-phospho-alpha-D-ribose 1-diphosphate: step 6/9. The polypeptide is Imidazoleglycerol-phosphate dehydratase (Bacillus licheniformis (strain ATCC 14580 / DSM 13 / JCM 2505 / CCUG 7422 / NBRC 12200 / NCIMB 9375 / NCTC 10341 / NRRL NRS-1264 / Gibson 46)).